A 272-amino-acid chain; its full sequence is Ribonuclease 3 (272 aa).

Residues 1 to 22 (MSLQFLRSEASDGAGETSDASS) are disordered. The RNase III domain occupies 31–162 (TATHLARLTG…LVGAIYLDQG (132 aa)). Glutamate 75 serves as a coordination point for Mg(2+). Residue aspartate 79 is part of the active site. Mg(2+) contacts are provided by aspartate 148 and glutamate 151. Glutamate 151 is an active-site residue. The DRBM domain maps to 189 to 258 (NYKSRLIEYT…AKEAMKRLES (70 aa)).

This sequence belongs to the ribonuclease III family. Homodimer. Mg(2+) serves as cofactor.

It localises to the cytoplasm. The enzyme catalyses Endonucleolytic cleavage to 5'-phosphomonoester.. Digests double-stranded RNA. Involved in the processing of primary rRNA transcript to yield the immediate precursors to the large and small rRNAs (23S and 16S). Processes some mRNAs, and tRNAs when they are encoded in the rRNA operon. Processes pre-crRNA and tracrRNA of type II CRISPR loci if present in the organism. The chain is Ribonuclease 3 from Chlorobaculum tepidum (strain ATCC 49652 / DSM 12025 / NBRC 103806 / TLS) (Chlorobium tepidum).